A 105-amino-acid polypeptide reads, in one-letter code: Large ribosomal subunit protein uL24 (105 aa).

The protein belongs to the universal ribosomal protein uL24 family. As to quaternary structure, part of the 50S ribosomal subunit.

Its function is as follows. One of two assembly initiator proteins, it binds directly to the 5'-end of the 23S rRNA, where it nucleates assembly of the 50S subunit. In terms of biological role, one of the proteins that surrounds the polypeptide exit tunnel on the outside of the subunit. In Leptothrix cholodnii (strain ATCC 51168 / LMG 8142 / SP-6) (Leptothrix discophora (strain SP-6)), this protein is Large ribosomal subunit protein uL24.